Reading from the N-terminus, the 166-residue chain is NADH-ubiquinone oxidoreductase chain 6 (166 aa).

A run of 5 helical transmembrane segments spans residues 1-21 (MMYF…AFAS), 26-46 (IYGG…IVSL), 47-67 (GGSF…LVVF), 86-106 (TVVL…YEFF), and 139-159 (CGGW…FVVL).

The protein belongs to the complex I subunit 6 family. In terms of assembly, core subunit of respiratory chain NADH dehydrogenase (Complex I) which is composed of 45 different subunits.

It localises to the mitochondrion inner membrane. It carries out the reaction a ubiquinone + NADH + 5 H(+)(in) = a ubiquinol + NAD(+) + 4 H(+)(out). In terms of biological role, core subunit of the mitochondrial membrane respiratory chain NADH dehydrogenase (Complex I) which catalyzes electron transfer from NADH through the respiratory chain, using ubiquinone as an electron acceptor. Essential for the catalytic activity and assembly of complex I. The sequence is that of NADH-ubiquinone oxidoreductase chain 6 (MT-ND6) from Tachyglossus aculeatus aculeatus (Southeast Australian short-beaked echidna).